The chain runs to 279 residues: Eukaryotic translation initiation factor 3 subunit J (279 aa).

Disordered stretches follow at residues 1–74 (MSWD…SQKS) and 229–279 (ERQA…DDFM). The segment covering 20-39 (WEDEDNDDPLLESWDIDEEE) has biased composition (acidic residues). Positions 34–74 (DIDEEEVARKKKEEEAKKKAEKEALKQKQQEAKNKKLSQKS) form a coiled coil. Residues 40 to 67 (VARKKKEEEAKKKAEKEALKQKQQEAKN) show a composition bias toward basic and acidic residues. The segment covering 268–279 (DDFDDFDDDDFM) has biased composition (acidic residues).

The protein belongs to the eIF-3 subunit J family. Component of the eukaryotic translation initiation factor 3 (eIF-3) complex.

It is found in the cytoplasm. In terms of biological role, component of the eukaryotic translation initiation factor 3 (eIF-3) complex, which is involved in protein synthesis of a specialized repertoire of mRNAs and, together with other initiation factors, stimulates binding of mRNA and methionyl-tRNAi to the 40S ribosome. The eIF-3 complex specifically targets and initiates translation of a subset of mRNAs involved in cell proliferation. This chain is Eukaryotic translation initiation factor 3 subunit J, found in Meyerozyma guilliermondii (strain ATCC 6260 / CBS 566 / DSM 6381 / JCM 1539 / NBRC 10279 / NRRL Y-324) (Yeast).